The following is a 661-amino-acid chain: Potassium voltage-gated channel subfamily KQT member 1 (661 aa).

Disordered stretches follow at residues 1 to 29 (MAAASTPPRAERKRXSWSRLPGAQRESAG) and 42 to 88 (ESGP…SLDP). The Cytoplasmic segment spans residues 1 to 119 (MAAASTPPRA…YNFLERPTGW (119 aa)). A Phosphoserine; by PKA modification is found at Ser-27. Positions 54–85 (VSPPSAPEPAPPASPASPAPPAADQGPQPPVS) are enriched in pro residues. Residues 120–141 (KCFAYHFTVFLIVLVCLIFSVL) form a helical membrane-spanning segment. Topologically, residues 142–152 (STIEQYATLAT) are extracellular. Residues 153–175 (GTLFWMEIVLVVFFGTEYVVRLW) form a helical membrane-spanning segment. Residues 176-191 (SAGCRSKYVGLWGRLR) are Cytoplasmic-facing. A helical transmembrane segment spans residues 192–217 (FARKPISIIDLIVVVASMVVLCVGSK). At 218-225 (GQVFATSA) the chain is on the extracellular side. The chain crosses the membrane as a helical; Voltage-sensor span at residues 226 to 241 (IRGIRFLQILRMLHVD). Residues 237-245 (MLHVDRQGG) form an interaction with KCNE3 region. Residues 242-259 (RQGGTWRLLGSVVFIHRQ) lie on the Cytoplasmic side of the membrane. Gln-243 provides a ligand contact to a 1,2-diacyl-sn-glycero-3-phospho-(1D-myo-inositol-4,5-bisphosphate). Residues 260 to 282 (ELITTLYIGFLGLIFSSYFVYLA) traverse the membrane as a helical segment. At 283-298 (EKDAVNESGRVEFGSY) the chain is on the extracellular side. N-linked (GlcNAc...) asparagine glycosylation is present at Asn-288. The pore-forming intramembrane region spans 299 to 319 (ADALWWGVVTVTTIGYGDKVP). At 320-321 (QT) the chain is on the extracellular side. A helical membrane pass occupies residues 322–347 (WVGKTIASCFSVFAISFFALPAGILG). The Cytoplasmic segment spans residues 348-661 (SGFALKVQQK…VPRRDPEEGS (314 aa)). Residues 369-381 (AAASLIQTAWRCY) are interaction with CALM. Phosphoserine is present on residues Ser-406 and Ser-408. The interaction with CALM; calcium-dependent stretch occupies residues 514-528 (KVIRRMQYFVAKKKF). An interaction with KCNE1 C-terminus region spans residues 534-571 (PYDVRDVIEQYSQGHLNLMVRIKELQRRLDQSIGKPSL). A coiled-coil region spans residues 584 to 620 (SNSIGARLNRVEDKVTQLDQRLVLIADMLQQLLALHQ). The interval 587–615 (IGARLNRVEDKVTQLDQRLVLIADMLQQL) is interaction with AKAP9. The segment at 588–619 (GARLNRVEDKVTQLDQRLVLIADMLQQLLALH) is C-terminal assembly domain (tetramerization). Positions 624–661 (HGGAHPAQARDGDPADPELFLPTYEQLTVPRRDPEEGS) are disordered.

The protein belongs to the potassium channel family. KQT (TC 1.A.1.15) subfamily. Kv7.1/KCNQ1 sub-subfamily. In terms of assembly, tetramer. Heterotetramer with KCNE1; targets to the membrane raft. Interacts (via C-terminus) with CALM; forms a heterooctameric structure (with 4:4 KCNQ1:CALM stoichiometry) in a calcium-independent manner. Interacts with AKAP9; targets protein kinase A (PKA) catalytic and regulatory subunits and protein phosphatase 1 (PP1) to the KCNQ1-KCNE1 complex, allowing PKA-mediated phosphorylation and increase of delayed rectifier potassium channel activity. Interacts with KCNE2; form a heterooligomer complex that targets to the membrane raft and leading to currents with an apparently instantaneous activation, a rapid deactivation process and a linear current-voltage relationship and decreases the amplitude of the outward current. Interacts with AP2M1; mediates estrogen-induced internalization via clathrin-coated vesicles. Interacts with NEDD4L; promotes internalization and decreases I(Ks) currents. Interacts with USP2; counteracts the NEDD4L-specific down-regulation of I(Ks) and restore plasma membrane localization. Heterotetramer with KCNQ5; has a voltage-gated potassium channel activity. Interacts with KCNE3; four KCNE3 molecules are bound to one KCNQ1 tetramer (4:4 KCNQ1:KCNE3 stoichiometry); alters membrane raft localization; affects KCNQ1 structure and gating properties. Interacts with KCNE4; impairs KCNQ1 localization in lipid rafts and inhibits voltage-gated potassium channel activity. Interacts with KCNE5; impairs KCNQ1 localization in lipid rafts and only conducts current upon strong and continued depolarization. Interacts with SLC5A3; forms coregulatory channel-transporter complexes that modulate Na(+)-coupled myo-inositol influx through the transporter. Phosphorylation at Ser-27 by PKA; increases delayed rectifier potassium channel activity of the KCNQ1-KCNE1 complex through a macromolecular complex that includes PKA, PP1, and the targeting protein AKAP9. Post-translationally, ubiquitinated by NEDD4L; promotes internalization. The ubiquitinylated form is internalized through a clathrin-mediated endocytosis by interacting with AP2M1 and is recycled back to the cell membrane via RAB4A and RAB11A. In terms of processing, deubiquitinated by USP2; counteracts the NEDD4L-specific down-regulation of I(Ks) and restores the membrane localization.

Its subcellular location is the cell membrane. The protein resides in the cytoplasmic vesicle membrane. The protein localises to the early endosome. It is found in the membrane raft. It localises to the endoplasmic reticulum. Its subcellular location is the basolateral cell membrane. The protein resides in the apical cell membrane. The enzyme catalyses K(+)(in) = K(+)(out). With respect to regulation, PIP2 molecule is essential to activate KCNQ channels by inducing the coupling of the voltage-sensing domain (VSD) and the pore-forming domain (PD). Upon channel activation, PIP2 disrupts the VSD-calmodulin/CALM interactions, causing the release of CALM from the VSD which triggers the opening of the gate. Calcium potentiates KCNQ1 channel current through calcium-bound CALM. Calcium-bound CALM competes with PIP2 to stabilize the channel open state. In terms of biological role, pore-forming subunit of the voltage-gated potassium (Kv) channel involved in the regulation of cardiomyocyte excitability and important in normal development and functions of myocardium, inner ear, stomach and colon. Associates with KCNE beta subunits that modulates current kinetics. Induces a voltage-dependent by rapidly activating and slowly deactivating potassium-selective outward current. Also promotes a delayed voltage activated potassium current showing outward rectification characteristic. During beta-adrenergic receptor stimulation participates in cardiac repolarization by associating with KCNE1 to form the I(Ks) cardiac potassium current that increases the amplitude and slows down the activation kinetics of outward potassium current I(Ks). Muscarinic agonist oxotremorine-M strongly suppresses KCNQ1/KCNE1 current. When associated with KCNE3, forms the potassium channel that is important for cyclic AMP-stimulated intestinal secretion of chloride ions. This interaction with KCNE3 is reduced by 17beta-estradiol, resulting in the reduction of currents. During conditions of increased substrate load, maintains the driving force for proximal tubular and intestinal sodium ions absorption, gastric acid secretion, and cAMP-induced jejunal chloride ions secretion. Allows the provision of potassium ions to the luminal membrane of the secretory canaliculus in the resting state as well as during stimulated acid secretion. When associated with KCNE2, forms a heterooligomer complex leading to currents with an apparently instantaneous activation, a rapid deactivation process and a linear current-voltage relationship and decreases the amplitude of the outward current. When associated with KCNE4, inhibits voltage-gated potassium channel activity. When associated with KCNE5, this complex only conducts current upon strong and continued depolarization. Also forms a heterotetramer with KCNQ5 that has a voltage-gated potassium channel activity. Binds with phosphatidylinositol 4,5-bisphosphate. KCNQ1-KCNE2 channel associates with Na(+)-coupled myo-inositol symporter in the apical membrane of choroid plexus epithelium and regulates the myo-inositol gradient between blood and cerebrospinal fluid with an impact on neuron excitability. This chain is Potassium voltage-gated channel subfamily KQT member 1, found in Oryctolagus cuniculus (Rabbit).